A 719-amino-acid chain; its full sequence is MTDNNNLDSLIIDKDEYLNSPMNVVDKLFKFDQNNLNNGTVYKKFENVISEDQIYKSIPLVSTINQCDLNSGKLVKIRCMIQDIFDPQFCPSFNKIKNIETNEIRLEASKYKDKINLNDCEELIFDSFDSSTFDKTILYCIPIPCENKWVNNNNNNNNNNNNNNNNNNNNNNNNGNEQISSSLLNKKKRNIDDADMKNENDEENKKSKDQKSTTTTTTTTSKEGEEEGEEGEQLTKSKKLLTNNKIDINKIFNYPIPIDSNDENNLKTPFIVNIYDDDIIFDENNKAVTFKINEIIEFVGVVAKFNPTLQHQSSNSSDQGETTTTIIDLMSMLDVDEISTIPDTLIPQFHAITYRYLDPYKFNHLNPFSIDTNTTINNNNNNNNNNNNNNNNNNNNNNNNNNNNNNPNNNNPNNNNLNNNLIRNELIKFIKLFIVDELLSEYLLFHLISKVYSFTSGLSIGNFSMNISIPNDKEFQRLPQLIELLYEILLARSYRFSMSLENLNDMDVVPYKDYDRNRIVSGLLQLPKGTNLILDETQLTEGKVESQGIKVLNALNTLSIQQKVEYDFKYHPIEIQTDLPTISISFGKSLIKGTTQISINKSIQLPTINEINQQLIHSYNNDKLNQFRNYINHCKNLSFKISSPTTTTIAESDDATRHIQEDFVKSRQLDSKMTTDVFHYWLTLSRLVALSFNDQYIKIDKWNIMKSLEEKRKLTINNL.

Over residues 152 to 174 the composition is skewed to low complexity; the sequence is NNNNNNNNNNNNNNNNNNNNNNN. Disordered stretches follow at residues 152–179, 194–236, and 375–416; these read NNNN…NEQI, ADMK…QLTK, and TINN…NNNN. Positions 194–211 are enriched in basic and acidic residues; sequence ADMKNENDEENKKSKDQK. Composition is skewed to low complexity over residues 212 to 221 and 377 to 416; these read STTTTTTTTS and NNNN…NNNN.

This sequence belongs to the MCMBP family. In terms of assembly, interacts with the MCM complex.

It is found in the nucleus. Associated component of the MCM complex that acts as a regulator of DNA replication. Binds to the MCM complex during late S phase and may act by promoting the disassembly of the MCM complex from chromatin. The sequence is that of Mini-chromosome maintenance complex-binding protein (mcmbp) from Dictyostelium discoideum (Social amoeba).